The chain runs to 146 residues: ATP synthase epsilon chain 2 (146 aa).

This sequence belongs to the ATPase epsilon chain family. In terms of assembly, F-type ATPases have 2 components, CF(1) - the catalytic core - and CF(0) - the membrane proton channel. CF(1) has five subunits: alpha(3), beta(3), gamma(1), delta(1), epsilon(1). CF(0) has three main subunits: a, b and c.

The protein resides in the cell inner membrane. Functionally, produces ATP from ADP in the presence of a proton gradient across the membrane. This chain is ATP synthase epsilon chain 2, found in Cereibacter sphaeroides (strain ATCC 17023 / DSM 158 / JCM 6121 / CCUG 31486 / LMG 2827 / NBRC 12203 / NCIMB 8253 / ATH 2.4.1.) (Rhodobacter sphaeroides).